We begin with the raw amino-acid sequence, 416 residues long: Probable protein phosphatase 2C 75 (416 aa).

Disordered stretches follow at residues 1–20 and 32–51; these read MTEI…SPTK and RRQA…DRTD. The PPM-type phosphatase domain occupies 108 to 411; sequence LYGIVSVMGR…DNISVVVIDL (304 aa). Residues aspartate 149, glycine 150, aspartate 337, and aspartate 402 each contribute to the Mn(2+) site.

The protein belongs to the PP2C family. The cofactor is Mg(2+). It depends on Mn(2+) as a cofactor.

The enzyme catalyses O-phospho-L-seryl-[protein] + H2O = L-seryl-[protein] + phosphate. It catalyses the reaction O-phospho-L-threonyl-[protein] + H2O = L-threonyl-[protein] + phosphate. Its function is as follows. Negative regulator of abscisic acid (ABA) responses during seed germination. The polypeptide is Probable protein phosphatase 2C 75 (AHG1) (Arabidopsis thaliana (Mouse-ear cress)).